A 71-amino-acid polypeptide reads, in one-letter code: ATP synthase F(0) complex subunit e, mitochondrial (71 aa).

The residue at position 34 (lysine 34) is an N6-acetyllysine. A Phosphoserine modification is found at serine 68.

It belongs to the ATPase e subunit family. Component of the ATP synthase complex composed at least of ATP5F1A/subunit alpha, ATP5F1B/subunit beta, ATP5MC1/subunit c (homooctomer), MT-ATP6/subunit a, MT-ATP8/subunit 8, ATP5ME/subunit e, ATP5MF/subunit f, ATP5MG/subunit g, ATP5MK/subunit k, ATP5MJ/subunit j, ATP5F1C/subunit gamma, ATP5F1D/subunit delta, ATP5F1E/subunit epsilon, ATP5PF/subunit F6, ATP5PB/subunit b, ATP5PD/subunit d, ATP5PO/subunit OSCP. ATP synthase complex consists of a soluble F(1) head domain (subunits alpha(3) and beta(3)) - the catalytic core - and a membrane F(0) domain - the membrane proton channel (subunits c, a, 8, e, f, g, k and j). These two domains are linked by a central stalk (subunits gamma, delta, and epsilon) rotating inside the F1 region and a stationary peripheral stalk (subunits F6, b, d, and OSCP).

The protein localises to the mitochondrion. The protein resides in the mitochondrion inner membrane. Functionally, subunit e, of the mitochondrial membrane ATP synthase complex (F(1)F(0) ATP synthase or Complex V) that produces ATP from ADP in the presence of a proton gradient across the membrane which is generated by electron transport complexes of the respiratory chain. ATP synthase complex consist of a soluble F(1) head domain - the catalytic core - and a membrane F(1) domain - the membrane proton channel. These two domains are linked by a central stalk rotating inside the F(1) region and a stationary peripheral stalk. During catalysis, ATP synthesis in the catalytic domain of F(1) is coupled via a rotary mechanism of the central stalk subunits to proton translocation. In vivo, can only synthesize ATP although its ATP hydrolase activity can be activated artificially in vitro. Part of the complex F(0) domain. The polypeptide is ATP synthase F(0) complex subunit e, mitochondrial (Pongo abelii (Sumatran orangutan)).